The following is a 104-amino-acid chain: Pyrimidine/purine nucleoside phosphorylase (104 aa).

Belongs to the nucleoside phosphorylase PpnP family.

The catalysed reaction is a purine D-ribonucleoside + phosphate = a purine nucleobase + alpha-D-ribose 1-phosphate. It catalyses the reaction adenosine + phosphate = alpha-D-ribose 1-phosphate + adenine. It carries out the reaction cytidine + phosphate = cytosine + alpha-D-ribose 1-phosphate. The enzyme catalyses guanosine + phosphate = alpha-D-ribose 1-phosphate + guanine. The catalysed reaction is inosine + phosphate = alpha-D-ribose 1-phosphate + hypoxanthine. It catalyses the reaction thymidine + phosphate = 2-deoxy-alpha-D-ribose 1-phosphate + thymine. It carries out the reaction uridine + phosphate = alpha-D-ribose 1-phosphate + uracil. The enzyme catalyses xanthosine + phosphate = alpha-D-ribose 1-phosphate + xanthine. Its function is as follows. Catalyzes the phosphorolysis of diverse nucleosides, yielding D-ribose 1-phosphate and the respective free bases. Can use uridine, adenosine, guanosine, cytidine, thymidine, inosine and xanthosine as substrates. Also catalyzes the reverse reactions. This is Pyrimidine/purine nucleoside phosphorylase from Geobacter metallireducens (strain ATCC 53774 / DSM 7210 / GS-15).